A 43-amino-acid chain; its full sequence is Ferritin light chain (43 aa).

The region spanning 1-43 is the Ferritin-like diiron domain; the sequence is MEAALLVEKNLNQALLDLHGLASARGDPHICDFLENHFLDEEV.

This sequence belongs to the ferritin family. As to quaternary structure, oligomer of 24 subunits. There are two types of subunits: L (light) chain and H (heavy) chain. The major chain can be light or heavy, depending on the species and tissue type. The functional molecule forms a roughly spherical shell with a diameter of 12 nm and contains a central cavity into which the insoluble mineral iron core is deposited. Interacts with NCOA4.

The protein localises to the cytoplasmic vesicle. It localises to the autophagosome. The protein resides in the cytoplasm. Its subcellular location is the autolysosome. Functionally, stores iron in a soluble, non-toxic, readily available form. Important for iron homeostasis. Iron is taken up in the ferrous form and deposited as ferric hydroxides after oxidation. Also plays a role in delivery of iron to cells. Mediates iron uptake in capsule cells of the developing kidney. Delivery to lysosomes by the cargo receptor NCOA4 for autophagic degradation and release or iron. The polypeptide is Ferritin light chain (FTL) (Ovis aries (Sheep)).